The following is a 79-amino-acid chain: Acyl carrier protein (79 aa).

Residues 4-79 (AEIKDKVYDI…QAIDYIVNKK (76 aa)) form the Carrier domain. At Ser39 the chain carries O-(pantetheine 4'-phosphoryl)serine.

Belongs to the acyl carrier protein (ACP) family. 4'-phosphopantetheine is transferred from CoA to a specific serine of apo-ACP by AcpS. This modification is essential for activity because fatty acids are bound in thioester linkage to the sulfhydryl of the prosthetic group.

The protein localises to the cytoplasm. Its pathway is lipid metabolism; fatty acid biosynthesis. In terms of biological role, carrier of the growing fatty acid chain in fatty acid biosynthesis. This chain is Acyl carrier protein, found in Pelodictyon phaeoclathratiforme (strain DSM 5477 / BU-1).